The chain runs to 149 residues: D-aminoacyl-tRNA deacylase (149 aa).

The Gly-cisPro motif, important for rejection of L-amino acids motif lies at G137–P138.

It belongs to the DTD family. Homodimer.

The protein localises to the cytoplasm. The enzyme catalyses glycyl-tRNA(Ala) + H2O = tRNA(Ala) + glycine + H(+). The catalysed reaction is a D-aminoacyl-tRNA + H2O = a tRNA + a D-alpha-amino acid + H(+). Its function is as follows. An aminoacyl-tRNA editing enzyme that deacylates mischarged D-aminoacyl-tRNAs. Also deacylates mischarged glycyl-tRNA(Ala), protecting cells against glycine mischarging by AlaRS. Acts via tRNA-based rather than protein-based catalysis; rejects L-amino acids rather than detecting D-amino acids in the active site. By recycling D-aminoacyl-tRNA to D-amino acids and free tRNA molecules, this enzyme counteracts the toxicity associated with the formation of D-aminoacyl-tRNA entities in vivo and helps enforce protein L-homochirality. The sequence is that of D-aminoacyl-tRNA deacylase from Leuconostoc mesenteroides subsp. mesenteroides (strain ATCC 8293 / DSM 20343 / BCRC 11652 / CCM 1803 / JCM 6124 / NCDO 523 / NBRC 100496 / NCIMB 8023 / NCTC 12954 / NRRL B-1118 / 37Y).